We begin with the raw amino-acid sequence, 338 residues long: SPbeta prophage-derived uncharacterized protein YonB (338 aa).

This chain is SPbeta prophage-derived uncharacterized protein YonB (yonB), found in Bacillus subtilis (strain 168).